We begin with the raw amino-acid sequence, 872 residues long: DNA mismatch repair protein MutS (872 aa).

626 to 633 (GPNMAGKS) provides a ligand contact to ATP.

Belongs to the DNA mismatch repair MutS family.

In terms of biological role, this protein is involved in the repair of mismatches in DNA. It is possible that it carries out the mismatch recognition step. This protein has a weak ATPase activity. The chain is DNA mismatch repair protein MutS from Chlorobium phaeobacteroides (strain DSM 266 / SMG 266 / 2430).